We begin with the raw amino-acid sequence, 438 residues long: Lipoyl synthase, mitochondrial (438 aa).

The N-terminal 31 residues, 1–31 (MAASARGLRTLQSAHSSTTVPRLQLAVSRCY), are a transit peptide targeting the mitochondrion. Positions 34 to 57 (TTSPDPPITNSSNSSNSSNSTPTP) are enriched in low complexity. The disordered stretch occupies residues 34–58 (TTSPDPPITNSSNSSNSSNSTPTPK). Positions 148, 153, 159, 179, 183, 186, and 394 each coordinate [4Fe-4S] cluster. Positions 162 to 383 (GSSKSAATAT…KERALEMGFL (222 aa)) constitute a Radical SAM core domain.

Belongs to the radical SAM superfamily. Lipoyl synthase family. The cofactor is [4Fe-4S] cluster.

It is found in the mitochondrion. The enzyme catalyses [[Fe-S] cluster scaffold protein carrying a second [4Fe-4S](2+) cluster] + N(6)-octanoyl-L-lysyl-[protein] + 2 oxidized [2Fe-2S]-[ferredoxin] + 2 S-adenosyl-L-methionine + 4 H(+) = [[Fe-S] cluster scaffold protein] + N(6)-[(R)-dihydrolipoyl]-L-lysyl-[protein] + 4 Fe(3+) + 2 hydrogen sulfide + 2 5'-deoxyadenosine + 2 L-methionine + 2 reduced [2Fe-2S]-[ferredoxin]. Its pathway is protein modification; protein lipoylation via endogenous pathway; protein N(6)-(lipoyl)lysine from octanoyl-[acyl-carrier-protein]: step 2/2. Functionally, catalyzes the radical-mediated insertion of two sulfur atoms into the C-6 and C-8 positions of the octanoyl moiety bound to the lipoyl domains of lipoate-dependent enzymes, thereby converting the octanoylated domains into lipoylated derivatives. This Paracoccidioides brasiliensis (strain Pb18) protein is Lipoyl synthase, mitochondrial.